Reading from the N-terminus, the 298-residue chain is Lipoyl synthase (298 aa).

[4Fe-4S] cluster contacts are provided by Cys-40, Cys-45, Cys-51, Cys-67, Cys-71, Cys-74, and Ser-280. Positions 53–269 (AVRRTATFMI…KEIALSKGFS (217 aa)) constitute a Radical SAM core domain.

Belongs to the radical SAM superfamily. Lipoyl synthase family. It depends on [4Fe-4S] cluster as a cofactor.

It is found in the cytoplasm. It catalyses the reaction [[Fe-S] cluster scaffold protein carrying a second [4Fe-4S](2+) cluster] + N(6)-octanoyl-L-lysyl-[protein] + 2 oxidized [2Fe-2S]-[ferredoxin] + 2 S-adenosyl-L-methionine + 4 H(+) = [[Fe-S] cluster scaffold protein] + N(6)-[(R)-dihydrolipoyl]-L-lysyl-[protein] + 4 Fe(3+) + 2 hydrogen sulfide + 2 5'-deoxyadenosine + 2 L-methionine + 2 reduced [2Fe-2S]-[ferredoxin]. The protein operates within protein modification; protein lipoylation via endogenous pathway; protein N(6)-(lipoyl)lysine from octanoyl-[acyl-carrier-protein]. Catalyzes the radical-mediated insertion of two sulfur atoms into the C-6 and C-8 positions of the octanoyl moiety bound to the lipoyl domains of lipoate-dependent enzymes, thereby converting the octanoylated domains into lipoylated derivatives. The polypeptide is Lipoyl synthase (Geobacillus kaustophilus (strain HTA426)).